Consider the following 86-residue polypeptide: uncharacterized protein (86 aa).

To M.jannaschii MJ1173.

This is an uncharacterized protein from Methanosarcina mazei (strain ATCC BAA-159 / DSM 3647 / Goe1 / Go1 / JCM 11833 / OCM 88) (Methanosarcina frisia).